A 180-amino-acid polypeptide reads, in one-letter code: ATP synthase subunit delta 2 (180 aa).

Belongs to the ATPase delta chain family. In terms of assembly, F-type ATPases have 2 components, F(1) - the catalytic core - and F(0) - the membrane proton channel. F(1) has five subunits: alpha(3), beta(3), gamma(1), delta(1), epsilon(1). F(0) has three main subunits: a(1), b(2) and c(10-14). The alpha and beta chains form an alternating ring which encloses part of the gamma chain. F(1) is attached to F(0) by a central stalk formed by the gamma and epsilon chains, while a peripheral stalk is formed by the delta and b chains.

It is found in the cell inner membrane. Functionally, f(1)F(0) ATP synthase produces ATP from ADP in the presence of a proton or sodium gradient. F-type ATPases consist of two structural domains, F(1) containing the extramembraneous catalytic core and F(0) containing the membrane proton channel, linked together by a central stalk and a peripheral stalk. During catalysis, ATP synthesis in the catalytic domain of F(1) is coupled via a rotary mechanism of the central stalk subunits to proton translocation. Its function is as follows. This protein is part of the stalk that links CF(0) to CF(1). It either transmits conformational changes from CF(0) to CF(1) or is implicated in proton conduction. The chain is ATP synthase subunit delta 2 from Vibrio campbellii (strain ATCC BAA-1116).